Consider the following 259-residue polypeptide: Phosphoribosylaminoimidazole-succinocarboxamide synthase (259 aa).

It belongs to the SAICAR synthetase family.

The catalysed reaction is 5-amino-1-(5-phospho-D-ribosyl)imidazole-4-carboxylate + L-aspartate + ATP = (2S)-2-[5-amino-1-(5-phospho-beta-D-ribosyl)imidazole-4-carboxamido]succinate + ADP + phosphate + 2 H(+). It functions in the pathway purine metabolism; IMP biosynthesis via de novo pathway; 5-amino-1-(5-phospho-D-ribosyl)imidazole-4-carboxamide from 5-amino-1-(5-phospho-D-ribosyl)imidazole-4-carboxylate: step 1/2. The chain is Phosphoribosylaminoimidazole-succinocarboxamide synthase from Hyphomonas neptunium (strain ATCC 15444).